We begin with the raw amino-acid sequence, 230 residues long: Probable cobalt-precorrin-2 C(20)-methyltransferase (230 aa).

The protein belongs to the precorrin methyltransferase family.

It carries out the reaction Co-precorrin-2 + S-adenosyl-L-methionine = Co-precorrin-3 + S-adenosyl-L-homocysteine + H(+). Its pathway is cofactor biosynthesis; adenosylcobalamin biosynthesis; cob(II)yrinate a,c-diamide from sirohydrochlorin (anaerobic route): step 2/10. In terms of biological role, methylates cobalt-precorrin-2 at the C-20 position to produce cobalt-precorrin-3A in the anaerobic cobalamin biosynthesis pathway. The sequence is that of Probable cobalt-precorrin-2 C(20)-methyltransferase (cbiL) from Methanocaldococcus jannaschii (strain ATCC 43067 / DSM 2661 / JAL-1 / JCM 10045 / NBRC 100440) (Methanococcus jannaschii).